A 118-amino-acid polypeptide reads, in one-letter code: Small ribosomal subunit protein uS13 (118 aa).

The segment at S94–K118 is disordered.

It belongs to the universal ribosomal protein uS13 family. As to quaternary structure, part of the 30S ribosomal subunit. Forms a loose heterodimer with protein S19. Forms two bridges to the 50S subunit in the 70S ribosome.

Located at the top of the head of the 30S subunit, it contacts several helices of the 16S rRNA. In the 70S ribosome it contacts the 23S rRNA (bridge B1a) and protein L5 of the 50S subunit (bridge B1b), connecting the 2 subunits; these bridges are implicated in subunit movement. Contacts the tRNAs in the A and P-sites. The chain is Small ribosomal subunit protein uS13 from Colwellia psychrerythraea (strain 34H / ATCC BAA-681) (Vibrio psychroerythus).